We begin with the raw amino-acid sequence, 337 residues long: MFSKKPHGDVKKSTQKVLDTKKDALTRLKHLRIVIENAESIDLKQFFDQHFSHIYYVFFENFVTIEASLKQKGHKSQREELDAILFIFEKILQLLPERIHQRWQFHSIGLILKKLLHTGNSLKIRREGVRLFLLWLQALQNNCSREQLWMFSCLIPGFSAPQSEYGPRTLDNLINPPLNLQETQVTIEEITPLVPPQSGDKGQEDLTSYFLEALLKYIVIQVKSLEWKNKENQERGFSFLFSHFKKYYLPYIFPNICKENSLYHPVLDIPQMRPKPHYVMIKKDAETNEAIYCTKEPFIKARVIVIRWLVSFWLEPKPHTGPHIPGMEGEVLPKNIQ.

In terms of assembly, component of the heterodimeric RalGAP1 complex with RALGAPB. Heterodimerization is required for activity. Interacts with the HLH region of TCF3/isoform E12.

It localises to the cytoplasm. Its subcellular location is the nucleus. Catalytic subunit of the heterodimeric RalGAP1 complex which acts as a GTPase activator for the Ras-like small GTPases RALA and RALB. This Sus scrofa (Pig) protein is Ral GTPase-activating protein subunit alpha-1.